The sequence spans 869 residues: DNA mismatch repair protein MutS (869 aa).

602–609 (GPNMSGKS) lines the ATP pocket.

It belongs to the DNA mismatch repair MutS family.

This protein is involved in the repair of mismatches in DNA. It is possible that it carries out the mismatch recognition step. This protein has a weak ATPase activity. This is DNA mismatch repair protein MutS from Bacillus licheniformis (strain ATCC 14580 / DSM 13 / JCM 2505 / CCUG 7422 / NBRC 12200 / NCIMB 9375 / NCTC 10341 / NRRL NRS-1264 / Gibson 46).